Reading from the N-terminus, the 126-residue chain is MDRRHRFALQAEIWVADHLAAQGGLVLARRWRCRGGEIDLVVRLGGVLCFVEVKARGGNSWDSAGWEAVGAVKQRRLLLAAALFLAAHPELARSVCRFDVALVGRDPGGGVRLVAYIAGAFEGSGR.

Belongs to the UPF0102 family.

This is UPF0102 protein gll3754 from Gloeobacter violaceus (strain ATCC 29082 / PCC 7421).